Reading from the N-terminus, the 261-residue chain is 7beta-hydroxysteroid dehydrogenase (261 aa).

NADP(+) contacts are provided by residues 17–21 (TEGIG), 40–41 (RR), and 66–67 (DL). Tyr-156 acts as the Proton acceptor in catalysis.

Belongs to the short-chain dehydrogenases/reductases (SDR) family. As to quaternary structure, homodimer.

It catalyses the reaction a 7beta-hydroxysteroid + NADP(+) = a 7-oxosteroid + NADPH + H(+). The catalysed reaction is ursocholate + NADP(+) = 3alpha,12alpha-dihydroxy-7-oxo-5beta-cholanate + NADPH + H(+). It carries out the reaction 7-oxolithocholate + NADPH + H(+) = ursodeoxycholate + NADP(+). The enzyme catalyses 3alpha,7beta-dihydroxy-12-oxo-5beta-cholan-24-oate + NADP(+) = 7,12-dioxo-lithocholate + NADPH + H(+). It catalyses the reaction 7beta-hydroxy-3,12-dioxo-5beta-cholan-24-oate + NADP(+) = dehydrocholate + NADPH + H(+). 7beta-hydroxysteroid dehydrogenase that catalyzes the reduction of the 7-oxo group of 7-oxosteroids, such as 3alpha,12alpha-dihydroxy-7-oxo-5beta-cholanate, 7-oxolithocholate, 7,12-dioxo-lithocholate and dehydrocholate, to the corresponding 7beta-hydroxysteroids. Is also able to catalyze the reverse oxidation reactions. Together with 7alpha-HSDH encoded in the adjacent gene, is likely involved in the epimerization of the hydroxy group at C-7 of primary bile acids through 7-keto bile acid intermediates. This Clostridium sardiniense (Clostridium absonum) protein is 7beta-hydroxysteroid dehydrogenase.